The sequence spans 326 residues: 4-hydroxythreonine-4-phosphate dehydrogenase (326 aa).

The substrate site is built by His133 and Thr134. A divalent metal cation is bound by residues His163, His208, and His263. The substrate site is built by Lys271, Asn280, and Arg289.

The protein belongs to the PdxA family. In terms of assembly, homodimer. The cofactor is Zn(2+). Mg(2+) is required as a cofactor. It depends on Co(2+) as a cofactor.

It localises to the cytoplasm. The enzyme catalyses 4-(phosphooxy)-L-threonine + NAD(+) = 3-amino-2-oxopropyl phosphate + CO2 + NADH. It functions in the pathway cofactor biosynthesis; pyridoxine 5'-phosphate biosynthesis; pyridoxine 5'-phosphate from D-erythrose 4-phosphate: step 4/5. Catalyzes the NAD(P)-dependent oxidation of 4-(phosphooxy)-L-threonine (HTP) into 2-amino-3-oxo-4-(phosphooxy)butyric acid which spontaneously decarboxylates to form 3-amino-2-oxopropyl phosphate (AHAP). The sequence is that of 4-hydroxythreonine-4-phosphate dehydrogenase from Pseudoalteromonas atlantica (strain T6c / ATCC BAA-1087).